We begin with the raw amino-acid sequence, 794 residues long: Lon protease (794 aa).

Residues 29-222 (VPLLPLRGVL…TLISIIQDEQ (194 aa)) form the Lon N-terminal domain. 374–381 (GPPGVGKT) is an ATP binding site. The Lon proteolytic domain maps to 610-791 (TDQVGMATGL…DEVLEHALVG (182 aa)). Catalysis depends on residues Ser-697 and Lys-740.

This sequence belongs to the peptidase S16 family. In terms of assembly, homohexamer. Organized in a ring with a central cavity.

It is found in the cytoplasm. The enzyme catalyses Hydrolysis of proteins in presence of ATP.. In terms of biological role, ATP-dependent serine protease that mediates the selective degradation of mutant and abnormal proteins as well as certain short-lived regulatory proteins. Required for cellular homeostasis and for survival from DNA damage and developmental changes induced by stress. Degrades polypeptides processively to yield small peptide fragments that are 5 to 10 amino acids long. Binds to DNA in a double-stranded, site-specific manner. The protein is Lon protease of Bacillus thuringiensis (strain Al Hakam).